Reading from the N-terminus, the 674-residue chain is Translation factor GUF1, mitochondrial (674 aa).

Residues 1–33 (MLRPWFCFRSCVSLLSNRRQYGFRYLATAEPSK) constitute a mitochondrion transit peptide. The interval 32–51 (SKSEKPAKPVKPAKPMSVQE) is disordered. In terms of domain architecture, tr-type G spans 75-257 (QNYRNFSIVA…SIIKNIPAPV (183 aa)). GTP-binding positions include 84 to 91 (AHVDHGKS), 150 to 154 (DTPGH), and 204 to 207 (NKID).

This sequence belongs to the TRAFAC class translation factor GTPase superfamily. Classic translation factor GTPase family. LepA subfamily.

The protein localises to the mitochondrion inner membrane. The enzyme catalyses GTP + H2O = GDP + phosphate + H(+). In terms of biological role, promotes mitochondrial protein synthesis. May act as a fidelity factor of the translation reaction, by catalyzing a one-codon backward translocation of tRNAs on improperly translocated ribosomes. Binds to mitochondrial ribosomes in a GTP-dependent manner. This Lodderomyces elongisporus (strain ATCC 11503 / CBS 2605 / JCM 1781 / NBRC 1676 / NRRL YB-4239) (Yeast) protein is Translation factor GUF1, mitochondrial.